We begin with the raw amino-acid sequence, 718 residues long: Cyclomaltodextrin glucanotransferase (718 aa).

Residues 1–34 form the signal peptide; it reads MFQMAKRVLLSTTLTFSLLAGSALPFLPASAIYA. The interval 35 to 172 is A1; it reads DADTAVTNKQ…GIKIIIDFAP (138 aa). Residues aspartate 61, asparagine 63, asparagine 66, and asparagine 67 each contribute to the Ca(2+) site. Cysteines 77 and 84 form a disulfide. Residues glycine 85 and aspartate 87 each contribute to the Ca(2+) site. 134–135 serves as a coordination point for substrate; it reads YW. Asparagine 173 provides a ligand contact to Ca(2+). Residues 173 to 236 form a b region; sequence NHTSPAMETD…NLYDLADLNH (64 aa). Histidine 174 is a substrate binding site. A Ca(2+)-binding site is contributed by isoleucine 224. 227–230 provides a ligand contact to substrate; it reads NLYD. Aspartate 233 contributes to the Ca(2+) binding site. The A2 stretch occupies residues 237 to 440; sequence NNSTIDTYFK…LRKSNPAIAY (204 aa). Residue arginine 261 coordinates substrate. Aspartate 263 serves as the catalytic Nucleophile. 266–267 is a substrate binding site; the sequence is KH. Position 267 (histidine 267) interacts with Ca(2+). The Proton donor role is filled by glutamate 291. 3 residues coordinate substrate: histidine 361, aspartate 405, and arginine 409. Positions 441–528 are c; the sequence is GSTQQRWINN…ATAVWQYTAS (88 aa). Residues 529 to 614 are d; it reads ETTPTIGHVG…SNAYNDFTIL (86 aa). Residues 532 to 612 form the IPT/TIG domain; it reads PTIGHVGPVM…VNSNAYNDFT (81 aa). The CBM20 domain maps to 613-718; it reads ILSGDQVSVR…GTATVTINWQ (106 aa). The e stretch occupies residues 615–718; sequence SGDQVSVRFV…GTATVTINWQ (104 aa).

Belongs to the glycosyl hydrolase 13 family. Monomer. It depends on Ca(2+) as a cofactor.

Its subcellular location is the secreted. It catalyses the reaction Cyclizes part of a (1-&gt;4)-alpha-D-glucan chain by formation of a (1-&gt;4)-alpha-D-glucosidic bond.. This chain is Cyclomaltodextrin glucanotransferase (cgtA), found in Bacillus licheniformis.